A 224-amino-acid chain; its full sequence is Ribonuclease HII (224 aa).

Positions Met-1–Lys-219 constitute an RNase H type-2 domain. Positions 7, 8, and 105 each coordinate a divalent metal cation.

The protein belongs to the RNase HII family. The cofactor is Mn(2+). Mg(2+) serves as cofactor.

It is found in the cytoplasm. The catalysed reaction is Endonucleolytic cleavage to 5'-phosphomonoester.. Endonuclease that specifically degrades the RNA of RNA-DNA hybrids. The sequence is that of Ribonuclease HII from Methanosarcina barkeri (strain Fusaro / DSM 804).